The following is a 359-amino-acid chain: Probable dual-specificity RNA methyltransferase RlmN (359 aa).

Residue Glu100 is the Proton acceptor of the active site. Positions 106-340 (TDKRLTVCVS…VSVRASRGRD (235 aa)) constitute a Radical SAM core domain. A disulfide bridge links Cys113 with Cys345. [4Fe-4S] cluster is bound by residues Cys120, Cys124, and Cys127. S-adenosyl-L-methionine-binding positions include 167–168 (GE), Ser197, 226–228 (SLH), and Asn302. Cys345 acts as the S-methylcysteine intermediate in catalysis.

This sequence belongs to the radical SAM superfamily. RlmN family. It depends on [4Fe-4S] cluster as a cofactor.

It is found in the cytoplasm. The catalysed reaction is adenosine(2503) in 23S rRNA + 2 reduced [2Fe-2S]-[ferredoxin] + 2 S-adenosyl-L-methionine = 2-methyladenosine(2503) in 23S rRNA + 5'-deoxyadenosine + L-methionine + 2 oxidized [2Fe-2S]-[ferredoxin] + S-adenosyl-L-homocysteine. The enzyme catalyses adenosine(37) in tRNA + 2 reduced [2Fe-2S]-[ferredoxin] + 2 S-adenosyl-L-methionine = 2-methyladenosine(37) in tRNA + 5'-deoxyadenosine + L-methionine + 2 oxidized [2Fe-2S]-[ferredoxin] + S-adenosyl-L-homocysteine. Specifically methylates position 2 of adenine 2503 in 23S rRNA and position 2 of adenine 37 in tRNAs. The polypeptide is Probable dual-specificity RNA methyltransferase RlmN (Prochlorococcus marinus (strain NATL1A)).